The chain runs to 47 residues: Small ribosomal subunit protein uS14 (47 aa).

Zn(2+)-binding residues include Cys-12, Cys-15, Cys-30, and Cys-33.

It belongs to the universal ribosomal protein uS14 family. Zinc-binding uS14 subfamily. Part of the 30S ribosomal subunit. Zn(2+) is required as a cofactor.

Functionally, binds 16S rRNA, required for the assembly of 30S particles. This chain is Small ribosomal subunit protein uS14, found in Methanosphaera stadtmanae (strain ATCC 43021 / DSM 3091 / JCM 11832 / MCB-3).